The chain runs to 644 residues: Translation factor guf1, mitochondrial (644 aa).

The N-terminal 31 residues, 1–31, are a transit peptide targeting the mitochondrion; it reads MTLRRFSYTFQARILRGLQARPVFVLPSRSH. The tr-type G domain occupies 51 to 232; that stretch reads VNIRNWAIIS…AIIQRVPHPI (182 aa). Residues 60–67, 125–129, and 179–182 each bind GTP; these read SHIDHGKS, DTPGH, and NKID.

The protein belongs to the TRAFAC class translation factor GTPase superfamily. Classic translation factor GTPase family. LepA subfamily.

It localises to the mitochondrion inner membrane. The enzyme catalyses GTP + H2O = GDP + phosphate + H(+). Its function is as follows. Promotes mitochondrial protein synthesis. May act as a fidelity factor of the translation reaction, by catalyzing a one-codon backward translocation of tRNAs on improperly translocated ribosomes. Binds to mitochondrial ribosomes in a GTP-dependent manner. This chain is Translation factor guf1, mitochondrial (guf1), found in Schizosaccharomyces japonicus (strain yFS275 / FY16936) (Fission yeast).